The sequence spans 273 residues: Putative pyruvate, phosphate dikinase regulatory protein (273 aa).

Residue 149–156 (GPSRTSKT) participates in ADP binding.

Belongs to the pyruvate, phosphate/water dikinase regulatory protein family. PDRP subfamily.

The catalysed reaction is N(tele)-phospho-L-histidyl/L-threonyl-[pyruvate, phosphate dikinase] + ADP = N(tele)-phospho-L-histidyl/O-phospho-L-threonyl-[pyruvate, phosphate dikinase] + AMP + H(+). It catalyses the reaction N(tele)-phospho-L-histidyl/O-phospho-L-threonyl-[pyruvate, phosphate dikinase] + phosphate + H(+) = N(tele)-phospho-L-histidyl/L-threonyl-[pyruvate, phosphate dikinase] + diphosphate. Functionally, bifunctional serine/threonine kinase and phosphorylase involved in the regulation of the pyruvate, phosphate dikinase (PPDK) by catalyzing its phosphorylation/dephosphorylation. The sequence is that of Putative pyruvate, phosphate dikinase regulatory protein from Rickettsia typhi (strain ATCC VR-144 / Wilmington).